Consider the following 257-residue polypeptide: UPF0246 protein lpl1317 (257 aa).

The protein belongs to the UPF0246 family.

The protein is UPF0246 protein lpl1317 of Legionella pneumophila (strain Lens).